We begin with the raw amino-acid sequence, 88 residues long: Putative transposase InsN for insertion sequence element IS911B (88 aa).

The protein belongs to the transposase 8 family.

Its function is as follows. Involved in the transposition of the insertion sequence IS911. The sequence is that of Putative transposase InsN for insertion sequence element IS911B (insN2) from Escherichia coli (strain K12).